The primary structure comprises 471 residues: Ribulose bisphosphate carboxylase large chain (471 aa).

Residues N115 and T165 each coordinate substrate. K167 (proton acceptor) is an active-site residue. Substrate is bound at residue K169. Mg(2+) is bound by residues K193, D195, and E196. N6-carboxylysine is present on K193. The active-site Proton acceptor is H286. R287, H319, and S371 together coordinate substrate.

The protein belongs to the RuBisCO large chain family. Type I subfamily. Heterohexadecamer of 8 large chains and 8 small chains. Mg(2+) serves as cofactor.

It localises to the carboxysome. The catalysed reaction is 2 (2R)-3-phosphoglycerate + 2 H(+) = D-ribulose 1,5-bisphosphate + CO2 + H2O. It carries out the reaction D-ribulose 1,5-bisphosphate + O2 = 2-phosphoglycolate + (2R)-3-phosphoglycerate + 2 H(+). In terms of biological role, ruBisCO catalyzes two reactions: the carboxylation of D-ribulose 1,5-bisphosphate, the primary event in carbon dioxide fixation, as well as the oxidative fragmentation of the pentose substrate in the photorespiration process. Both reactions occur simultaneously and in competition at the same active site. This Synechococcus sp. (strain CC9605) protein is Ribulose bisphosphate carboxylase large chain.